The primary structure comprises 187 residues: Bifunctional protein PyrR (187 aa).

Residues 109–121 (VILVDDVLYSGRS) carry the PRPP-binding motif.

This sequence belongs to the purine/pyrimidine phosphoribosyltransferase family. PyrR subfamily.

The enzyme catalyses UMP + diphosphate = 5-phospho-alpha-D-ribose 1-diphosphate + uracil. Its function is as follows. Regulates the transcription of the pyrimidine nucleotide (pyr) operon in response to exogenous pyrimidines. In terms of biological role, also displays a weak uracil phosphoribosyltransferase activity which is not physiologically significant. This Mycobacterium ulcerans (strain Agy99) protein is Bifunctional protein PyrR.